The chain runs to 300 residues: Light-independent protochlorophyllide reductase iron-sulfur ATP-binding protein (300 aa).

ATP contacts are provided by residues 43-48 (GIGKST) and Lys72. Ser47 is a Mg(2+) binding site. [4Fe-4S] cluster is bound by residues Cys128 and Cys162. Residue 213–214 (NR) coordinates ATP.

This sequence belongs to the NifH/BchL/ChlL family. Homodimer. Protochlorophyllide reductase is composed of three subunits; ChlL, ChlN and ChlB. Requires [4Fe-4S] cluster as cofactor.

The catalysed reaction is chlorophyllide a + oxidized 2[4Fe-4S]-[ferredoxin] + 2 ADP + 2 phosphate = protochlorophyllide a + reduced 2[4Fe-4S]-[ferredoxin] + 2 ATP + 2 H2O. The protein operates within porphyrin-containing compound metabolism; chlorophyll biosynthesis (light-independent). In terms of biological role, component of the dark-operative protochlorophyllide reductase (DPOR) that uses Mg-ATP and reduced ferredoxin to reduce ring D of protochlorophyllide (Pchlide) to form chlorophyllide a (Chlide). This reaction is light-independent. The L component serves as a unique electron donor to the NB-component of the complex, and binds Mg-ATP. In Synechococcus sp. (strain RCC307), this protein is Light-independent protochlorophyllide reductase iron-sulfur ATP-binding protein.